Reading from the N-terminus, the 357-residue chain is MAAAELADTQLMLGVGLIEKDTNGEVLWVWCYPSTTATLRNLLLRKCCLTDENKLLHPFVFGQYRRTWFYITIIEVPDSSILKKVTHFSIVLTAKDFNPEKYAAFTRILCRMYLKHGSPVKMMESYIAVLTKGICQSEENGSFLSKDFDARKAYPAGSIKDIVSQFGMETVILHTALMLKKRIVVYHPKIEAVQEFTRTLPALVWHRQDWTILHSYVHLNADELEALQMCTGYVAGFVDLEVSNRPDLYDVFVNLAESEITIAPLAKEAMAMGKLHKEMGQLIVQSAEDPEKSESQVIQDIALKTREIFTNLAPFSEVSADGEKRVLNLEALKQKRFPPATENFLYHLAAAEQMLKI.

A uDENN domain is found at 1–140 (MAAAELADTQ…TKGICQSEEN (140 aa)). The region spanning 159-299 (IKDIVSQFGM…PEKSESQVIQ (141 aa)) is the cDENN domain. The dDENN domain occupies 301-357 (IALKTREIFTNLAPFSEVSADGEKRVLNLEALKQKRFPPATENFLYHLAAAEQMLKI).

It belongs to the DENND10 family.

It is found in the late endosome. Functionally, may be a guanine nucleotide exchange factor (GEF). In Homo sapiens (Human), this protein is Putative DENN domain-containing protein 10 B.